Here is a 253-residue protein sequence, read N- to C-terminus: MTTIDLNCDLGESFGAYKMGNDDKILPFVSSINVACGFHAGDPSVMRQTVEKAMQHNVAIGAHPGFPDLIGFGRRNMNVSASEIYDYVLYQIGALDAFVKAAGGKMQHVKPHGALYNMAATNPEIADAIAKAIYHINPSLLLYGLANSEAFIQAAEKYNITLVQEAFADRTYKQDGTLTSRTEENALIKNEEEAIKQVLQMVKEGYVNSVNGEKVAVQAQTICLHGDGEKAVQFAKRIYRTFEHNGISICAPK.

Belongs to the LamB/PxpA family. In terms of assembly, forms a complex composed of PxpA, PxpB and PxpC.

It catalyses the reaction 5-oxo-L-proline + ATP + 2 H2O = L-glutamate + ADP + phosphate + H(+). Catalyzes the cleavage of 5-oxoproline to form L-glutamate coupled to the hydrolysis of ATP to ADP and inorganic phosphate. This chain is 5-oxoprolinase subunit A, found in Bacillus thuringiensis subsp. konkukian (strain 97-27).